The following is a 693-amino-acid chain: Elongation factor G (693 aa).

Positions 9-283 constitute a tr-type G domain; the sequence is ERVRNIGIIA…AVCDYLPSPL (275 aa). GTP-binding positions include 18–25, 82–86, and 136–139; these read AHIDAGKT, DTPGH, and NKMD.

The protein belongs to the TRAFAC class translation factor GTPase superfamily. Classic translation factor GTPase family. EF-G/EF-2 subfamily.

It localises to the cytoplasm. In terms of biological role, catalyzes the GTP-dependent ribosomal translocation step during translation elongation. During this step, the ribosome changes from the pre-translocational (PRE) to the post-translocational (POST) state as the newly formed A-site-bound peptidyl-tRNA and P-site-bound deacylated tRNA move to the P and E sites, respectively. Catalyzes the coordinated movement of the two tRNA molecules, the mRNA and conformational changes in the ribosome. This chain is Elongation factor G, found in Dehalococcoides mccartyi (strain ATCC BAA-2100 / JCM 16839 / KCTC 5957 / BAV1).